A 373-amino-acid chain; its full sequence is MSGKAQLVLEDGRVFTGTAFGAIGQTLGEAVFSTGMSGYQETLTDPSYHRQIVVATAPQIGNTGWNGEDAESRGDKIWVAGYAVRDPSPRVSNWRATGSLEDELIRQRIVGIARIDTRAVVRHLRTRGSMKAGVFSGDALADPDELVQRVRGQQSMLGADLAGEVSTPDAYIVEPEGPPRFTVAALDLGIKTNTPRNFARRGIRSHVLPSSATFEQIADLRPDGVFLSNGPGDPATADHIVAVTREVLGAGIPLFGICFGNQILGRALGLSTYKMVFGHRGINIPVIDHATGRVAVTAQNHGFALQGEAGQSFDTPFGAAVVSHTCANDGVVEGVKLADGRAFSVQYHPEAAAGPHDANYLFDQFIELMEGDR.

The CPSase stretch occupies residues 1–179 (MSGKAQLVLE…AYIVEPEGPP (179 aa)). The L-glutamine site is built by serine 47, glycine 230, and glycine 232. In terms of domain architecture, Glutamine amidotransferase type-1 spans 182–373 (TVAALDLGIK…QFIELMEGDR (192 aa)). Cysteine 258 (nucleophile) is an active-site residue. Positions 259, 262, 300, 302, and 303 each coordinate L-glutamine. Active-site residues include histidine 348 and glutamate 350.

Belongs to the CarA family. In terms of assembly, composed of two chains; the small (or glutamine) chain promotes the hydrolysis of glutamine to ammonia, which is used by the large (or ammonia) chain to synthesize carbamoyl phosphate. Tetramer of heterodimers (alpha,beta)4.

It catalyses the reaction hydrogencarbonate + L-glutamine + 2 ATP + H2O = carbamoyl phosphate + L-glutamate + 2 ADP + phosphate + 2 H(+). It carries out the reaction L-glutamine + H2O = L-glutamate + NH4(+). It participates in amino-acid biosynthesis; L-arginine biosynthesis; carbamoyl phosphate from bicarbonate: step 1/1. Its pathway is pyrimidine metabolism; UMP biosynthesis via de novo pathway; (S)-dihydroorotate from bicarbonate: step 1/3. In terms of biological role, small subunit of the glutamine-dependent carbamoyl phosphate synthetase (CPSase). CPSase catalyzes the formation of carbamoyl phosphate from the ammonia moiety of glutamine, carbonate, and phosphate donated by ATP, constituting the first step of 2 biosynthetic pathways, one leading to arginine and/or urea and the other to pyrimidine nucleotides. The small subunit (glutamine amidotransferase) binds and cleaves glutamine to supply the large subunit with the substrate ammonia. The polypeptide is Carbamoyl phosphate synthase small chain (Mycolicibacterium paratuberculosis (strain ATCC BAA-968 / K-10) (Mycobacterium paratuberculosis)).